We begin with the raw amino-acid sequence, 319 residues long: Annexin A4 (319 aa).

Position 2 is an N-acetylalanine (Ala-2). Residue Thr-7 is modified to Phosphothreonine; by PKC. Position 12 is a phosphoserine (Ser-12). Annexin repeat units lie at residues 14-85 (FNAA…GMMT), 86-157 (PTVL…SLSA), 169-241 (ALVR…AIVK), and 245-316 (NKSA…ILCG). N6-acetyllysine is present on residues Lys-213, Lys-293, and Lys-300.

The protein belongs to the annexin family. As to quaternary structure, monomer.

It localises to the zymogen granule membrane. Calcium/phospholipid-binding protein which promotes membrane fusion and is involved in exocytosis. The protein is Annexin A4 (ANXA4) of Sus scrofa (Pig).